The chain runs to 389 residues: bZIP transcription factor 68 (389 aa).

The segment covering 1-16 (MGSSEMEKSGKEKEPK) has biased composition (basic and acidic residues). Disordered regions lie at residues 1–42 (MGSS…VSAG), 124–154 (MAEA…KRSK), 170–236 (AGKN…NLPV), 285–318 (QPWL…RKQA), and 356–389 (SSLK…QDVA). A compositionally biased stretch (low complexity) spans 19 to 32 (PPSTSSSAPATVVS). Positions 137 to 149 (GDGKPSDGKEKLP) are enriched in basic and acidic residues. K154 participates in a covalent cross-link: Glycyl lysine isopeptide (Lys-Gly) (interchain with G-Cter in ubiquitin). A compositionally biased stretch (low complexity) spans 170-205 (AGKNSGASANGACSKSAESGSDGSSDGSDANSQNDS). Composition is skewed to basic and acidic residues over residues 206–215 (GSRHNGKDGE) and 304–318 (SNRE…RKQA). Residues 295–358 (EIKRQRRKQS…EELLAENSSL (64 aa)) form the bZIP domain. The interval 297-316 (KRQRRKQSNRESARRSRLRK) is basic motif. A leucine-zipper region spans residues 323-358 (LAQRAEVLNGENSSLRAEINKLKSQYEELLAENSSL). The span at 356-366 (SSLKNKFSSAP) shows a compositional bias: polar residues. The segment covering 372-389 (DLDKNEQEPQRSTRQDVA) has biased composition (basic and acidic residues).

The protein belongs to the bZIP family. Monomer, homodimer and heterodimers with GBF1/BZIP41, GBF2/BZIP54 and GBF3/BZIP55. Heterodimers with BZIP16. Interacts with GIP1.

It localises to the nucleus. Its function is as follows. Transcriptional activator that binds to the G-box motif (5'-CACGTG-3') and other cis-acting elements with 5'-ACGT-3' core, such as Hex, C-box and as-1 motifs. Possesses high binding affinity to G-box, much lower affinity to Hex and C-box, and little affinity to as-1 element. G-box and G-box-like motifs are cis-acting elements defined in promoters of certain plant genes which are regulated by such diverse stimuli as light-induction or hormone control. Binds to the G-box motif 5'-CACGTG-3' of LHCB2.4 (At3g27690) promoter. May act as transcriptional activator in light-regulated expression of LHCB2.4. Probably binds DNA as monomer. DNA-binding activity is redox-dependent. This Arabidopsis thaliana (Mouse-ear cress) protein is bZIP transcription factor 68.